The chain runs to 51 residues: MPPVPARGRPSSSSDFCLYGMAVVNGFCVQDIPYGSRVVLPGRMRSSSAGA.

This is an uncharacterized protein from Treponema pallidum (strain Nichols).